Reading from the N-terminus, the 417-residue chain is Gamma-glutamyl phosphate reductase (417 aa).

The protein belongs to the gamma-glutamyl phosphate reductase family.

The protein resides in the cytoplasm. The catalysed reaction is L-glutamate 5-semialdehyde + phosphate + NADP(+) = L-glutamyl 5-phosphate + NADPH + H(+). It functions in the pathway amino-acid biosynthesis; L-proline biosynthesis; L-glutamate 5-semialdehyde from L-glutamate: step 2/2. Functionally, catalyzes the NADPH-dependent reduction of L-glutamate 5-phosphate into L-glutamate 5-semialdehyde and phosphate. The product spontaneously undergoes cyclization to form 1-pyrroline-5-carboxylate. The chain is Gamma-glutamyl phosphate reductase from Desulfitobacterium hafniense (strain DSM 10664 / DCB-2).